Reading from the N-terminus, the 651-residue chain is Acetyl-coenzyme A synthetase (651 aa).

Residues arginine 189–lysine 192, threonine 311, and asparagine 335 contribute to the CoA site. ATP contacts are provided by residues glycine 387 to proline 389, aspartate 411 to threonine 416, aspartate 500, and arginine 515. Residue serine 523 participates in CoA binding. ATP is bound at residue arginine 526. Mg(2+)-binding residues include valine 537, histidine 539, and valine 542. Residue arginine 584 coordinates CoA. An N6-acetyllysine modification is found at lysine 609.

This sequence belongs to the ATP-dependent AMP-binding enzyme family. Mg(2+) is required as a cofactor. In terms of processing, acetylated. Deacetylation by the SIR2-homolog deacetylase activates the enzyme.

It carries out the reaction acetate + ATP + CoA = acetyl-CoA + AMP + diphosphate. In terms of biological role, catalyzes the conversion of acetate into acetyl-CoA (AcCoA), an essential intermediate at the junction of anabolic and catabolic pathways. AcsA undergoes a two-step reaction. In the first half reaction, AcsA combines acetate with ATP to form acetyl-adenylate (AcAMP) intermediate. In the second half reaction, it can then transfer the acetyl group from AcAMP to the sulfhydryl group of CoA, forming the product AcCoA. The protein is Acetyl-coenzyme A synthetase of Rhizobium leguminosarum bv. trifolii (strain WSM2304).